Consider the following 235-residue polypeptide: Purine nucleoside phosphorylase DeoD-type (235 aa).

An a purine D-ribonucleoside-binding site is contributed by His-4. Residues Gly-20, Arg-24, Arg-43, and 87–90 (RVGT) contribute to the phosphate site. A purine D-ribonucleoside is bound by residues 178–180 (EME) and 202–203 (SD). The Proton donor role is filled by Asp-203.

The protein belongs to the PNP/UDP phosphorylase family. As to quaternary structure, homohexamer; trimer of homodimers.

It carries out the reaction a purine D-ribonucleoside + phosphate = a purine nucleobase + alpha-D-ribose 1-phosphate. The enzyme catalyses a purine 2'-deoxy-D-ribonucleoside + phosphate = a purine nucleobase + 2-deoxy-alpha-D-ribose 1-phosphate. Its function is as follows. Catalyzes the reversible phosphorolytic breakdown of the N-glycosidic bond in the beta-(deoxy)ribonucleoside molecules, with the formation of the corresponding free purine bases and pentose-1-phosphate. In Geobacillus sp. (strain WCH70), this protein is Purine nucleoside phosphorylase DeoD-type.